Reading from the N-terminus, the 104-residue chain is MFAVVKASGFQRLVEVGSVISIDPTNVDSGGFVHFPVLLLVDGAEVVSDPDKLRLARVSAKFLRKLRGPKVRIHKFKNKTGYHKRQGHRQGVYVFSVTSIERGD.

Belongs to the bacterial ribosomal protein bL21 family. As to quaternary structure, part of the 50S ribosomal subunit. Contacts protein L20.

This protein binds to 23S rRNA in the presence of protein L20. This chain is Large ribosomal subunit protein bL21, found in Tropheryma whipplei (strain Twist) (Whipple's bacillus).